The following is a 51-amino-acid chain: Small ribosomal subunit protein eS31 (51 aa).

Residues Cys21, Cys24, Cys39, and Cys42 each coordinate Zn(2+). The segment at 21-42 adopts a C4-type zinc-finger fold; the sequence is CVRCSNGVFMADHGDRYACGKC.

This sequence belongs to the eukaryotic ribosomal protein eS31 family. As to quaternary structure, part of the 30S ribosomal subunit. Zn(2+) serves as cofactor.

The sequence is that of Small ribosomal subunit protein eS31 from Methanothermobacter thermautotrophicus (strain ATCC 29096 / DSM 1053 / JCM 10044 / NBRC 100330 / Delta H) (Methanobacterium thermoautotrophicum).